The primary structure comprises 503 residues: Poxin-Schlafen (503 aa).

H15 acts as the Proton donor in catalysis. The active-site Shared with catalytic histidine of dimeric partner is the Y136. Residue K140 is the Proton acceptor; shared with catalytic histidine of dimeric partner of the active site.

In the N-terminal section; belongs to the poxin family. This sequence in the C-terminal section; belongs to the Schlafen protein family. Subgroup poxviridae B3 subfamily. As to quaternary structure, homodimer.

The enzyme catalyses 2',3'-cGAMP + H2O = Gp(2'-5')Ap(3') + H(+). Functionally, nuclease that is responsible for viral evasion of host cGAS-STING innate immunity. Cleaves 2',3'-cGAMP which is produced by host cGAS following recognition of cytosolic DNA and blocks the subsequent 2',3'-cGAMP-mediated activation of TMEM173/STING, which normally spreads to adjacent cells and activates the interferon and NF-kappa-B immune responses. This chain is Poxin-Schlafen (OPG188), found in Cynomys gunnisoni (Gunnison's prairie dog).